The sequence spans 298 residues: ATP synthase gamma chain (298 aa).

This sequence belongs to the ATPase gamma chain family. As to quaternary structure, F-type ATPases have 2 components, CF(1) - the catalytic core - and CF(0) - the membrane proton channel. CF(1) has five subunits: alpha(3), beta(3), gamma(1), delta(1), epsilon(1). CF(0) has three main subunits: a, b and c.

It is found in the cell inner membrane. In terms of biological role, produces ATP from ADP in the presence of a proton gradient across the membrane. The gamma chain is believed to be important in regulating ATPase activity and the flow of protons through the CF(0) complex. The chain is ATP synthase gamma chain from Wolinella succinogenes (strain ATCC 29543 / DSM 1740 / CCUG 13145 / JCM 31913 / LMG 7466 / NCTC 11488 / FDC 602W) (Vibrio succinogenes).